The following is a 303-amino-acid chain: Ribosomal protein uL3 glutamine methyltransferase (303 aa).

It belongs to the protein N5-glutamine methyltransferase family. PrmB subfamily.

It carries out the reaction L-glutaminyl-[ribosomal protein uL3] + S-adenosyl-L-methionine = N(5)-methyl-L-glutaminyl-[ribosomal protein uL3] + S-adenosyl-L-homocysteine + H(+). Functionally, methylates large ribosomal subunit protein uL3 on a specific glutamine residue. This is Ribosomal protein uL3 glutamine methyltransferase from Neisseria meningitidis serogroup A / serotype 4A (strain DSM 15465 / Z2491).